A 721-amino-acid chain; its full sequence is Exocyst complex component 3-like protein 4 (721 aa).

2 disordered regions span residues 1 to 52 (MPLP…SLGM) and 94 to 135 (GLTA…QAES). The segment covering 22-37 (SQTLPVTTWKSNSMKE) has biased composition (polar residues). Position 515 is a phosphoserine (Ser515).

The protein belongs to the SEC6 family.

The chain is Exocyst complex component 3-like protein 4 (Exoc3l4) from Mus musculus (Mouse).